We begin with the raw amino-acid sequence, 959 residues long: Protovillin (959 aa).

The segment at 1–53 (MEPPLELPTQRKRVIPSKFGILKRNAEIEAEKNRENLQQSSCFSHINEIGKEI) is tail. The core stretch occupies residues 54-832 (GLEIWKIIDD…PIMLPTSGVT (779 aa)). Gelsolin-like repeat units lie at residues 64 to 116 (STIQ…SQET), 204 to 244 (IRVK…LEKG), 309 to 366 (IKLY…DQRT), 479 to 529 (RNKF…EDKG), 603 to 647 (INIH…KEAA), and 713 to 754 (FKVF…TEKL). A run of 2 repeats spans residues 840 to 849 (TPKPITTPTV) and 851 to 860 (TPKPITTPTV). The segment at 840-860 (TPKPITTPTVTTPKPITTPTV) is 2 X 10 AA repeats of T-P-K-P-I-T-T-P-T-V. The 65-residue stretch at 895–959 (TTITTFYPLS…KQLRVDNGLF (65 aa)) folds into the HP domain.

Belongs to the villin/gelsolin family.

It localises to the cytoplasm. It is found in the cytoskeleton. Caps actin filaments but displays neither severing nor cross-linking nor nucleating activities. Protovillin seems to be a villin precursor with only archaic capping activity. It lacks essential changes in the sequence to allow bundling of actin filaments and consequently the appearance of microvilli. The chain is Protovillin (vilB) from Dictyostelium discoideum (Social amoeba).